Consider the following 383-residue polypeptide: GTPase-interacting component 2 (383 aa).

Residues 63–106 (SNKKNIELPPLSPNSHPSCHHRRSNSNSAKSKESSSSSSSANKT) are disordered. A compositionally biased stretch (low complexity) spans 87–105 (NSNSAKSKESSSSSSSANK). In terms of domain architecture, CRIB spans 134–147 (ISTPFDFQHISHAD). A compositionally biased stretch (polar residues) spans 155–165 (EQLQEPSSLST). The disordered stretch occupies residues 155-189 (EQLQEPSSLSTEIKDDYTSSSSKRDSKSLNKAFVT). Over residues 166–182 (EIKDDYTSSSSKRDSKS) the composition is skewed to basic and acidic residues. Residues Ser254, Ser258, Ser337, Ser345, and Ser367 each carry the phosphoserine modification. Residues 319–361 (ETPNSNKDSAKAFFPSRQSPLPKRRNSIATPSPQSKFSYSDSP) form a disordered region. Polar residues predominate over residues 345 to 361 (SIATPSPQSKFSYSDSP).

It belongs to the BORG/CEP family. Interacts with GTP-bound CDC42.

It is found in the bud neck. The protein resides in the bud tip. The protein localises to the cytoplasm. Its subcellular location is the cell cortex. It localises to the cytoskeleton. Its function is as follows. Required for cell size and shape control, bud site selection, bud emergence, actin cytoskeletal organization, mitotic spindle orientation/positioning, and mating projection formation in response to mating pheromone. This is GTPase-interacting component 2 (GIC2) from Saccharomyces cerevisiae (strain ATCC 204508 / S288c) (Baker's yeast).